The primary structure comprises 39 residues: Cytochrome b6-f complex subunit 5 (39 aa).

The chain crosses the membrane as a helical span at residues 5–25; the sequence is LLCGIVLGLVPITLLGLFVSA.

Belongs to the PetG family. As to quaternary structure, the 4 large subunits of the cytochrome b6-f complex are cytochrome b6, subunit IV (17 kDa polypeptide, PetD), cytochrome f and the Rieske protein, while the 4 small subunits are PetG, PetL, PetM and PetN. The complex functions as a dimer.

Its subcellular location is the cellular thylakoid membrane. Its function is as follows. Component of the cytochrome b6-f complex, which mediates electron transfer between photosystem II (PSII) and photosystem I (PSI), cyclic electron flow around PSI, and state transitions. PetG is required for either the stability or assembly of the cytochrome b6-f complex. In Prochlorococcus marinus (strain MIT 9515), this protein is Cytochrome b6-f complex subunit 5.